Reading from the N-terminus, the 326-residue chain is Thiazole synthase (326 aa).

Lys-168 serves as the catalytic Schiff-base intermediate with DXP. 1-deoxy-D-xylulose 5-phosphate contacts are provided by residues Gly-229, 255 to 256, and 277 to 278; these read AG and NT.

The protein belongs to the ThiG family. As to quaternary structure, homotetramer. Forms heterodimers with either ThiH or ThiS.

The protein localises to the cytoplasm. The catalysed reaction is [ThiS sulfur-carrier protein]-C-terminal-Gly-aminoethanethioate + 2-iminoacetate + 1-deoxy-D-xylulose 5-phosphate = [ThiS sulfur-carrier protein]-C-terminal Gly-Gly + 2-[(2R,5Z)-2-carboxy-4-methylthiazol-5(2H)-ylidene]ethyl phosphate + 2 H2O + H(+). Its pathway is cofactor biosynthesis; thiamine diphosphate biosynthesis. Its function is as follows. Catalyzes the rearrangement of 1-deoxy-D-xylulose 5-phosphate (DXP) to produce the thiazole phosphate moiety of thiamine. Sulfur is provided by the thiocarboxylate moiety of the carrier protein ThiS. In vitro, sulfur can be provided by H(2)S. This is Thiazole synthase from Magnetococcus marinus (strain ATCC BAA-1437 / JCM 17883 / MC-1).